Reading from the N-terminus, the 432-residue chain is 3-phosphoshikimate 1-carboxyvinyltransferase (432 aa).

3-phosphoshikimate is bound by residues Lys23, Ser24, and Arg28. Residue Lys23 participates in phosphoenolpyruvate binding. Gly95 and Arg123 together coordinate phosphoenolpyruvate. Positions 167, 169, 316, and 343 each coordinate 3-phosphoshikimate. Residue Gln169 participates in phosphoenolpyruvate binding. The Proton acceptor role is filled by Asp316. Phosphoenolpyruvate-binding residues include Arg347 and Arg391.

Belongs to the EPSP synthase family. Monomer.

It is found in the cytoplasm. The catalysed reaction is 3-phosphoshikimate + phosphoenolpyruvate = 5-O-(1-carboxyvinyl)-3-phosphoshikimate + phosphate. It functions in the pathway metabolic intermediate biosynthesis; chorismate biosynthesis; chorismate from D-erythrose 4-phosphate and phosphoenolpyruvate: step 6/7. Its function is as follows. Catalyzes the transfer of the enolpyruvyl moiety of phosphoenolpyruvate (PEP) to the 5-hydroxyl of shikimate-3-phosphate (S3P) to produce enolpyruvyl shikimate-3-phosphate and inorganic phosphate. In Limosilactobacillus fermentum (strain NBRC 3956 / LMG 18251) (Lactobacillus fermentum), this protein is 3-phosphoshikimate 1-carboxyvinyltransferase.